The following is a 446-amino-acid chain: Adenylosuccinate synthetase (446 aa).

Residues 20-26 and 48-50 each bind GTP; these read GDEGKGK and GHT. Asp-21 (proton acceptor) is an active-site residue. Mg(2+) contacts are provided by Asp-21 and Gly-48. Residues 21–24, 46–49, Thr-137, Arg-151, Gln-232, Thr-247, and Arg-319 each bind IMP; these read DEGK and NAGH. The active-site Proton donor is the His-49. A substrate-binding site is contributed by 315-321; sequence SVTGRPR. Residues Arg-321, 347 to 349, and 429 to 431 contribute to the GTP site; these read KLD and STG.

This sequence belongs to the adenylosuccinate synthetase family. In terms of assembly, homodimer. It depends on Mg(2+) as a cofactor.

The protein resides in the cytoplasm. It catalyses the reaction IMP + L-aspartate + GTP = N(6)-(1,2-dicarboxyethyl)-AMP + GDP + phosphate + 2 H(+). The protein operates within purine metabolism; AMP biosynthesis via de novo pathway; AMP from IMP: step 1/2. Its function is as follows. Plays an important role in the de novo pathway of purine nucleotide biosynthesis. Catalyzes the first committed step in the biosynthesis of AMP from IMP. The sequence is that of Adenylosuccinate synthetase from Polynucleobacter asymbioticus (strain DSM 18221 / CIP 109841 / QLW-P1DMWA-1) (Polynucleobacter necessarius subsp. asymbioticus).